Here is a 556-residue protein sequence, read N- to C-terminus: Formate--tetrahydrofolate ligase (556 aa).

Residue 65-72 (TPAGEGKS) coordinates ATP.

This sequence belongs to the formate--tetrahydrofolate ligase family.

It catalyses the reaction (6S)-5,6,7,8-tetrahydrofolate + formate + ATP = (6R)-10-formyltetrahydrofolate + ADP + phosphate. Its pathway is one-carbon metabolism; tetrahydrofolate interconversion. The polypeptide is Formate--tetrahydrofolate ligase (Natranaerobius thermophilus (strain ATCC BAA-1301 / DSM 18059 / JW/NM-WN-LF)).